Here is a 357-residue protein sequence, read N- to C-terminus: UDP-N-acetylglucosamine--N-acetylmuramyl-(pentapeptide) pyrophosphoryl-undecaprenol N-acetylglucosamine transferase (357 aa).

Residues 13–15, R166, S197, and Q292 contribute to the UDP-N-acetyl-alpha-D-glucosamine site; that span reads SAG.

It belongs to the glycosyltransferase 28 family. MurG subfamily.

It is found in the cell membrane. The enzyme catalyses di-trans,octa-cis-undecaprenyl diphospho-N-acetyl-alpha-D-muramoyl-L-alanyl-D-glutamyl-meso-2,6-diaminopimeloyl-D-alanyl-D-alanine + UDP-N-acetyl-alpha-D-glucosamine = di-trans,octa-cis-undecaprenyl diphospho-[N-acetyl-alpha-D-glucosaminyl-(1-&gt;4)]-N-acetyl-alpha-D-muramoyl-L-alanyl-D-glutamyl-meso-2,6-diaminopimeloyl-D-alanyl-D-alanine + UDP + H(+). The protein operates within cell wall biogenesis; peptidoglycan biosynthesis. In terms of biological role, cell wall formation. Catalyzes the transfer of a GlcNAc subunit on undecaprenyl-pyrophosphoryl-MurNAc-pentapeptide (lipid intermediate I) to form undecaprenyl-pyrophosphoryl-MurNAc-(pentapeptide)GlcNAc (lipid intermediate II). This Clostridium novyi (strain NT) protein is UDP-N-acetylglucosamine--N-acetylmuramyl-(pentapeptide) pyrophosphoryl-undecaprenol N-acetylglucosamine transferase.